Consider the following 287-residue polypeptide: Large ribosomal subunit protein uL2 (287 aa).

The disordered stretch occupies residues 221–287 (RGSVMNPCDH…SKRSRGGRDS (67 aa)). A compositionally biased stretch (basic residues) spans 258-287 (KTRKRNKPSNKFVLRKRRKTSKRSRGGRDS).

It belongs to the universal ribosomal protein uL2 family. Part of the 50S ribosomal subunit. Forms a bridge to the 30S subunit in the 70S ribosome.

Its function is as follows. One of the primary rRNA binding proteins. Required for association of the 30S and 50S subunits to form the 70S ribosome, for tRNA binding and peptide bond formation. It has been suggested to have peptidyltransferase activity; this is somewhat controversial. Makes several contacts with the 16S rRNA in the 70S ribosome. This is Large ribosomal subunit protein uL2 from Synechococcus sp. (strain RCC307).